A 261-amino-acid chain; its full sequence is (S)-ureidoglycine aminohydrolase (261 aa).

Positions 184 to 230 (LSFAPGASHGYIETHVQEHGAYILSGQGVYNLDNNWIPVKKGDYIFM) constitute a Cupin type-2 domain. Mn(2+) is bound by residues glutamate 196, histidine 198, histidine 202, and glutamine 236. Glutamate 196 provides a ligand contact to substrate. Substrate is bound by residues glutamine 236, tyrosine 249, and lysine 253.

It belongs to the UGHY family. In terms of assembly, monomer. It depends on Mn(2+) as a cofactor.

It is found in the cytoplasm. It carries out the reaction (S)-2-ureidoglycine + H2O = (S)-ureidoglycolate + NH4(+). In terms of biological role, involved in the anaerobic nitrogen utilization via the assimilation of allantoin. Catalyzes the second stereospecific hydrolysis reaction (deamination) of the allantoin degradation pathway, producing S-ureidoglycolate and ammonia from S-ureidoglycine. This Escherichia coli (strain K12) protein is (S)-ureidoglycine aminohydrolase (allE).